The sequence spans 339 residues: Anthranilate phosphoribosyltransferase (339 aa).

5-phospho-alpha-D-ribose 1-diphosphate-binding positions include G79, 82 to 83 (GD), S87, 89 to 92 (NIST), 107 to 115 (KHGNRSVSS), and S119. G79 is a binding site for anthranilate. S91 contacts Mg(2+). N110 contributes to the anthranilate binding site. R165 contributes to the anthranilate binding site. Mg(2+) is bound by residues D224 and E225.

This sequence belongs to the anthranilate phosphoribosyltransferase family. In terms of assembly, homodimer. Mg(2+) serves as cofactor.

The enzyme catalyses N-(5-phospho-beta-D-ribosyl)anthranilate + diphosphate = 5-phospho-alpha-D-ribose 1-diphosphate + anthranilate. It participates in amino-acid biosynthesis; L-tryptophan biosynthesis; L-tryptophan from chorismate: step 2/5. Catalyzes the transfer of the phosphoribosyl group of 5-phosphorylribose-1-pyrophosphate (PRPP) to anthranilate to yield N-(5'-phosphoribosyl)-anthranilate (PRA). This Exiguobacterium sibiricum (strain DSM 17290 / CCUG 55495 / CIP 109462 / JCM 13490 / 255-15) protein is Anthranilate phosphoribosyltransferase.